The sequence spans 662 residues: DNA ligase (662 aa).

NAD(+) contacts are provided by residues 31–35 (DYEYD), 80–81 (SL), and E109. The active-site N6-AMP-lysine intermediate is K111. NAD(+) is bound by residues R132, E166, K282, and K306. Residues C400, C403, C418, and C423 each contribute to the Zn(2+) site. Residues 581-662 (KVSNIFEGKT…FEEMLKGENI (82 aa)) enclose the BRCT domain.

It belongs to the NAD-dependent DNA ligase family. LigA subfamily. Mg(2+) serves as cofactor. It depends on Mn(2+) as a cofactor.

The enzyme catalyses NAD(+) + (deoxyribonucleotide)n-3'-hydroxyl + 5'-phospho-(deoxyribonucleotide)m = (deoxyribonucleotide)n+m + AMP + beta-nicotinamide D-nucleotide.. Functionally, DNA ligase that catalyzes the formation of phosphodiester linkages between 5'-phosphoryl and 3'-hydroxyl groups in double-stranded DNA using NAD as a coenzyme and as the energy source for the reaction. It is essential for DNA replication and repair of damaged DNA. The polypeptide is DNA ligase (Thermoanaerobacter sp. (strain X514)).